We begin with the raw amino-acid sequence, 473 residues long: MFDKKLLESSELYDKRYRNFSTLIILPLFILLVGGVIFTFFAHKELTVISTGSIEPTKIVAKIQSTNANPIIENNLKEGKVVKENSLLLKYNGTPEQTQLSELLTQKKQVLDKKAQLDLLQKSLTNEKNEFPTTDSFGYEKSFENYESQVKSLEATIQKSNQAVEDQNKSTESQKQAIQNQVATLQQAIQNYSEIENAVSSGGGVSQDNPYLSQYNSYQAQQATLEADLKNQKNPDETAKQATKSQEESLKSQFLSGLASSKDSLKSQIQSFNVQESSLTGSNAYDNSQSSQILTLKTQALSASNKEMTDLNSTLTDLETKISLQKQDDQYSQVFAEQTGVLHVLPDILGMKKIPIGTPIAEIYPLLKAETQVNLTSYIPSTQISGMKVGQKVRFTVQQNLPKPEILTGIIKQIDSAPTAFKEGNAYKVSATTAINAKDLPNIRYGLQGKTVTIIGKKTYFNYFLDKIMGRTS.

Topologically, residues 1–21 (MFDKKLLESSELYDKRYRNFS) are cytoplasmic. Residues 22 to 44 (TLIILPLFILLVGGVIFTFFAHK) form a helical membrane-spanning segment. Over 45–473 (ELTVISTGSI…FLDKIMGRTS (429 aa)) the chain is Extracellular.

The protein belongs to the membrane fusion protein (MFP) (TC 8.A.1) family.

The protein localises to the cell membrane. Functionally, involved in the secretion of a lactococcin. The polypeptide is Lactococcin A secretion protein LcnD-like (lcnD) (Lactococcus lactis subsp. lactis (strain IL1403) (Streptococcus lactis)).